We begin with the raw amino-acid sequence, 447 residues long: MPGLDDIRRAVSKLLKRSGPYENIVNEFIRDLQRALISADVNVRLVFNLTKRIRERALKEQPPPGLSRREWLVKLTYDELVKLFGGEYEPEVKPPYTPYVIMMVGVQGSGKTTTVGKLAKFYRGMGYRVGVVAADTYRPGAYEQLKQLADRAGAMFYGEPGSKDPVGIARRGVEELKQRGADIVIVDTAGRHGYGEEEALLDEMKRIAEAIKPDEVVLVIDAAMGQKSYDLAKRFHEATPVGSIIVTKMDGTAKGGGALSAVAATGARIKFIGTGEDIDEIEVFRPKRFVARLLGMGDLESLLEKIERLRGVEEFEKTVAEMMSGKITFRTIYKQLQQVTKLGPFRKILQMIPGISTMLESLDEAARLSEEKVKKWLTIMNSMTYEELDNPNLLEERSRVKRIAVGAGVEPSEVRELYNYYKSVKKMMRQLKKRKDLLERFARLGGV.

Residues 105-112, 187-191, and 247-250 contribute to the GTP site; these read GVQGSGKT, DTAGR, and TKMD.

Belongs to the GTP-binding SRP family. SRP54 subfamily. In terms of assembly, part of the signal recognition particle protein translocation system, which is composed of SRP and FtsY. Archaeal SRP consists of a 7S RNA molecule of 300 nucleotides and two protein subunits: SRP54 and SRP19.

It is found in the cytoplasm. The enzyme catalyses GTP + H2O = GDP + phosphate + H(+). In terms of biological role, involved in targeting and insertion of nascent membrane proteins into the cytoplasmic membrane. Binds to the hydrophobic signal sequence of the ribosome-nascent chain (RNC) as it emerges from the ribosomes. The SRP-RNC complex is then targeted to the cytoplasmic membrane where it interacts with the SRP receptor FtsY. This chain is Signal recognition particle 54 kDa protein, found in Hyperthermus butylicus (strain DSM 5456 / JCM 9403 / PLM1-5).